Reading from the N-terminus, the 156-residue chain is MFLLYSIMNTYFLFGTTDWATLNFLVSVCLDNDYLYNKNSLFFTFFIFFLAAVFKLGLPPFFFFKIEVYKGLPLFVTFFYSVFFFFNYLSGFFFLFFVFFTSFFVYFSYLLFFFVPVFVLFFFFYLTTYDNLNCFFSISSVINSTFLVYLLASSFF.

The protein resides in the mitochondrion. This is an uncharacterized protein from Paramecium tetraurelia.